The following is a 517-amino-acid chain: Urethanase (517 aa).

Active-site charge relay system residues include Lys98 and Ser173. Ser197 functions as the Acyl-ester intermediate in the catalytic mechanism.

This sequence belongs to the amidase family. As to quaternary structure, homooctamer.

It catalyses the reaction urethane + H2O + H(+) = ethanol + NH4(+) + CO2. With respect to regulation, exhibits poor salt tolerance but excellent tolerance to low concentrations of ethanol. EDTA has almost no impact on activity. Activity is increased in the presence of Ca(2+), Mg(2+) and Co(3+) and inhibited in the presence of Al(3+), Zn(2+) and Cu(2+). Hydrolase that can catalyze the degradation of ethyl carbamate (also called urethane), a probable human carcinogen widely found in alcoholic beverages. Can also use methyl carbamate, butyl carbamate, acetamide and urea. Also catalyzes the enantioselective hydrolysis of 2-phenylpropionamide, alpha-chlorophenylacetamide, 2-methyl-3-phenylpropionamide and alpha-methoxyphenylacetamide to the corresponding acids. Is inactive on benzamide and L-glutamine. The protein is Urethanase of Rhizobium radiobacter (Agrobacterium tumefaciens).